We begin with the raw amino-acid sequence, 208 residues long: Small ribosomal subunit protein uS4 (208 aa).

In terms of domain architecture, S4 RNA-binding spans 95-157 (RRIDNVVYRA…DSLKKLVRSN (63 aa)).

It belongs to the universal ribosomal protein uS4 family. Part of the 30S ribosomal subunit. Contacts protein S5. The interaction surface between S4 and S5 is involved in control of translational fidelity.

Functionally, one of the primary rRNA binding proteins, it binds directly to 16S rRNA where it nucleates assembly of the body of the 30S subunit. Its function is as follows. With S5 and S12 plays an important role in translational accuracy. The polypeptide is Small ribosomal subunit protein uS4 (Borrelia hermsii (strain HS1 / DAH)).